The following is a 38-amino-acid chain: Photosystem II reaction center protein L (38 aa).

Residues 17 to 37 (SLYWGLLLIFVLAVLFSSYIF) form a helical membrane-spanning segment.

The protein belongs to the PsbL family. As to quaternary structure, PSII is composed of 1 copy each of membrane proteins PsbA, PsbB, PsbC, PsbD, PsbE, PsbF, PsbH, PsbI, PsbJ, PsbK, PsbL, PsbM, PsbT, PsbX, PsbY, PsbZ, Psb30/Ycf12, at least 3 peripheral proteins of the oxygen-evolving complex and a large number of cofactors. It forms dimeric complexes.

Its subcellular location is the plastid. It localises to the chloroplast thylakoid membrane. In terms of biological role, one of the components of the core complex of photosystem II (PSII). PSII is a light-driven water:plastoquinone oxidoreductase that uses light energy to abstract electrons from H(2)O, generating O(2) and a proton gradient subsequently used for ATP formation. It consists of a core antenna complex that captures photons, and an electron transfer chain that converts photonic excitation into a charge separation. This subunit is found at the monomer-monomer interface and is required for correct PSII assembly and/or dimerization. The polypeptide is Photosystem II reaction center protein L (Oltmannsiellopsis viridis (Marine flagellate)).